Reading from the N-terminus, the 97-residue chain is Probable gamma-secretase subunit PEN-2 (97 aa).

At 1 to 20 (MLIPEDDKLDDEKMINIAKK) the chain is on the cytoplasmic side. The helical intramembrane region spans 21–39 (LWFIGFFFLPWVWLINILY). The Cytoplasmic portion of the chain corresponds to 40–55 (FIPYRNSLNDKVKWYL). Residues 56 to 76 (KFSLIGFLGYSTIFMGWMGIY) form a helical membrane-spanning segment. The Lumenal segment spans residues 77–97 (LVNRNKWGAFGDDISITIPFG).

It belongs to the PEN-2 family. The functional gamma-secretase complex is composed of at least four polypeptides: a presenilin homodimer, nicastrin, aph1 and psenen.

The protein resides in the endoplasmic reticulum membrane. It localises to the golgi apparatus. Its subcellular location is the golgi stack membrane. The protein localises to the cell membrane. It is found in the membrane. Its function is as follows. Essential subunit of the gamma-secretase complex, an endoprotease complex that catalyzes the intramembrane cleavage of integral membrane proteins such as Notch receptors. The gamma-secretase complex plays a role in Notch and Wnt signaling cascades and regulation of downstream processes via its role in processing key regulatory proteins. The chain is Probable gamma-secretase subunit PEN-2 (psenen) from Dictyostelium discoideum (Social amoeba).